The primary structure comprises 373 residues: L-threonine 3-dehydrogenase, mitochondrial (373 aa).

NAD(+) contacts are provided by residues 62–67, 88–90, 106–107, Tyr195, Lys199, and Ile225; these read GGLGQL, DIR, and DI. Tyr195 serves as the catalytic Proton donor/acceptor.

Belongs to the NAD(P)-dependent epimerase/dehydratase family. Homodimer.

The protein localises to the mitochondrion. The enzyme catalyses L-threonine + NAD(+) = (2S)-2-amino-3-oxobutanoate + NADH + H(+). Its pathway is amino-acid degradation; L-threonine degradation via oxydo-reductase pathway; glycine from L-threonine: step 1/2. In terms of biological role, catalyzes the NAD(+)-dependent oxidation of L-threonine to 2-amino-3-ketobutyrate, mediating L-threonine catabolism. The protein is L-threonine 3-dehydrogenase, mitochondrial of Sus scrofa (Pig).